A 225-amino-acid chain; its full sequence is Putative O-phosphotransferase MT2714 (225 aa).

Glycine 30–threonine 37 is an ATP binding site.

The protein to S.violaceus chloramphenicol 3-O phosphotransferase.

The protein is Putative O-phosphotransferase MT2714 of Mycobacterium tuberculosis (strain CDC 1551 / Oshkosh).